The primary structure comprises 74 residues: Conotoxin MiEr93 (74 aa).

Residues 1–22 (MKLTCVLIIAVLFLTAYQLATA) form the signal peptide. Residues 23–45 (ASYAKGKQKHRALRPADKHLRLT) constitute a propeptide that is removed on maturation. 3 disulfides stabilise this stretch: C48-C62, C55-C66, and C61-C73.

This sequence belongs to the conotoxin O1 superfamily. In terms of tissue distribution, expressed by the venom duct.

It localises to the secreted. The polypeptide is Conotoxin MiEr93 (Conus miles (Soldier cone)).